We begin with the raw amino-acid sequence, 517 residues long: RNA-binding region-containing protein 3 (517 aa).

The disordered stretch occupies residues 1–26 (MAAPEQPLAISRGCTSSSSLSPPRGD). Residues 1-257 (MAAPEQPLAI…STDDEDRQRM (257 aa)) form a necessary for interaction with PDCD7 region. Serine 21 bears the Phosphoserine mark. The 76-residue stretch at 27–102 (RTLLVRHLPA…HTLVVEFAKE (76 aa)) folds into the RRM 1 domain. Disordered regions lie at residues 106–130 (VHSP…DDKE) and 213–254 (MPLH…DEDR). Serine 108 is subject to Phosphoserine. Residues 115–130 (SEKKKRSDDPVEDDKE) show a composition bias toward basic and acidic residues. The interval 211 to 380 (DYMPLHAPLP…LDITEEIKED (170 aa)) is necessary for binding to m(7)G-capped U12 snRNA. The segment covering 217-230 (APLPPTSPQPPEEP) has biased composition (pro residues). The span at 231-252 (PLPDEDEELSSEESEYESTDDE) shows a compositional bias: acidic residues. An RRM 2 domain is found at 420–503 (CRIYVKNLAK…KPMVVQFARS (84 aa)).

As to quaternary structure, component of the U11/U12 snRNPs that are part of the U12-type spliceosome. Found in a complex with m(7)G-capped U12 snRNA. Interacts with PDCD7. Highly expressed in pancreas and kidney. Detected at lower levels in heart, brain, placenta, lung, liver, spleen, thymus, prostate, testis, ovary, small intestine, colon and leukocytes.

It is found in the nucleus. In terms of biological role, participates in pre-mRNA U12-dependent splicing, performed by the minor spliceosome which removes U12-type introns. U12-type introns comprises less than 1% of all non-coding sequences. Binds to the 3'-stem-loop of m(7)G-capped U12 snRNA. In Homo sapiens (Human), this protein is RNA-binding region-containing protein 3 (RNPC3).